The primary structure comprises 179 residues: Large ribosomal subunit protein uL5 (179 aa).

The protein belongs to the universal ribosomal protein uL5 family. Part of the 50S ribosomal subunit; part of the 5S rRNA/L5/L18/L25 subcomplex. Contacts the 5S rRNA and the P site tRNA. Forms a bridge to the 30S subunit in the 70S ribosome.

Functionally, this is one of the proteins that bind and probably mediate the attachment of the 5S RNA into the large ribosomal subunit, where it forms part of the central protuberance. In the 70S ribosome it contacts protein S13 of the 30S subunit (bridge B1b), connecting the 2 subunits; this bridge is implicated in subunit movement. Contacts the P site tRNA; the 5S rRNA and some of its associated proteins might help stabilize positioning of ribosome-bound tRNAs. The chain is Large ribosomal subunit protein uL5 from Alkalilimnicola ehrlichii (strain ATCC BAA-1101 / DSM 17681 / MLHE-1).